The sequence spans 819 residues: Meiotically up-regulated gene 45 protein (819 aa).

Residues 797 to 817 (AMCLLTLLIGIYLILQVVFIY) form a helical membrane-spanning segment.

The protein localises to the membrane. Its function is as follows. Has a role in meiosis. The chain is Meiotically up-regulated gene 45 protein (mug45) from Schizosaccharomyces pombe (strain 972 / ATCC 24843) (Fission yeast).